Reading from the N-terminus, the 262-residue chain is ClpXP adapter protein SpxH (262 aa).

Belongs to the SpxH family. As to quaternary structure, interacts with Spx.

The protein resides in the cytoplasm. Functionally, adapter protein required for efficient degradation of Spx by ClpXP under non-stress conditions. Interaction with Spx stabilizes Spx and exposes the C-terminus of Spx for recognition and proteolysis by ClpXP. The protein is ClpXP adapter protein SpxH of Staphylococcus saprophyticus subsp. saprophyticus (strain ATCC 15305 / DSM 20229 / NCIMB 8711 / NCTC 7292 / S-41).